The chain runs to 328 residues: DNA-directed RNA polymerase subunit alpha (328 aa).

Residues 1 to 234 (MQTAVNEFLT…QQLAVFVDLE (234 aa)) form an alpha N-terminal domain (alpha-NTD) region. Residues 248 to 328 (IDPILLRPVD…NWPPASLKND (81 aa)) are alpha C-terminal domain (alpha-CTD).

Belongs to the RNA polymerase alpha chain family. Homodimer. The RNAP catalytic core consists of 2 alpha, 1 beta, 1 beta' and 1 omega subunit. When a sigma factor is associated with the core the holoenzyme is formed, which can initiate transcription.

The enzyme catalyses RNA(n) + a ribonucleoside 5'-triphosphate = RNA(n+1) + diphosphate. In terms of biological role, DNA-dependent RNA polymerase catalyzes the transcription of DNA into RNA using the four ribonucleoside triphosphates as substrates. This is DNA-directed RNA polymerase subunit alpha from Cellvibrio japonicus (strain Ueda107) (Pseudomonas fluorescens subsp. cellulosa).